Consider the following 136-residue polypeptide: uncharacterized protein (136 aa).

Residues Arg74–His97 are disordered.

This is an uncharacterized protein from Saccharomyces cerevisiae (strain ATCC 204508 / S288c) (Baker's yeast).